The primary structure comprises 689 residues: Solute carrier family 22 member 23 (689 aa).

Disordered regions lie at residues Met-1–Ala-55 and Thr-162–Asn-188. N-linked (GlcNAc...) asparagine glycosylation occurs at Asn-24. The span at Trp-165–Thr-177 shows a compositional bias: polar residues. A run of 2 helical transmembrane segments spans residues Phe-229–Val-249 and Pro-253–Val-273. N-linked (GlcNAc...) asparagine glycosylation occurs at Asn-274. 8 consecutive transmembrane segments (helical) span residues Phe-283 to Leu-303, Phe-310 to Leu-330, Val-339 to Pro-359, Ala-462 to Val-482, Gly-489 to Leu-509, Ile-541 to Phe-561, Cys-572 to Ile-592, and Phe-601 to Leu-621.

This sequence belongs to the major facilitator (TC 2.A.1) superfamily. Organic cation transporter (TC 2.A.1.19) family. In terms of tissue distribution, expressed in many tissues, including brain, spinal cord, kidney, liver, eye, adipose tissue, lung, epididymis, adrenal gland, pineal gland, skeletal muscle, heart, spleen, thymus, ovary, uterus, testis and epididymis.

It localises to the membrane. This chain is Solute carrier family 22 member 23 (Slc22a23), found in Rattus norvegicus (Rat).